Consider the following 333-residue polypeptide: Phenylalanine--tRNA ligase alpha subunit (333 aa).

Glu-254 is a Mg(2+) binding site.

This sequence belongs to the class-II aminoacyl-tRNA synthetase family. Phe-tRNA synthetase alpha subunit type 1 subfamily. Tetramer of two alpha and two beta subunits. Mg(2+) is required as a cofactor.

Its subcellular location is the cytoplasm. The enzyme catalyses tRNA(Phe) + L-phenylalanine + ATP = L-phenylalanyl-tRNA(Phe) + AMP + diphosphate + H(+). The polypeptide is Phenylalanine--tRNA ligase alpha subunit (Xylella fastidiosa (strain M12)).